The following is a 573-amino-acid chain: SHC-transforming protein 2 (573 aa).

The region spanning 125–307 (LGPGVSYIVR…TGLEESAWGD (183 aa)) is the PID domain. The SH2 domain occupies 478–569 (WYHGRMSRRA…ESELHLRGVV (92 aa)).

In terms of assembly, interacts with the Trk receptors in a phosphotyrosine-dependent manner and MEGF12. Once activated, binds to GRB2. Post-translationally, phosphorylated on tyrosine by the Trk receptors.

In terms of biological role, signaling adapter that couples activated growth factor receptors to signaling pathway in neurons. Involved in the signal transduction pathways of neurotrophin-activated Trk receptors in cortical neurons. The protein is SHC-transforming protein 2 (Shc2) of Rattus norvegicus (Rat).